The following is an 89-amino-acid chain: Small ribosomal subunit protein uS15 (89 aa).

This sequence belongs to the universal ribosomal protein uS15 family. Part of the 30S ribosomal subunit. Forms a bridge to the 50S subunit in the 70S ribosome, contacting the 23S rRNA.

Functionally, one of the primary rRNA binding proteins, it binds directly to 16S rRNA where it helps nucleate assembly of the platform of the 30S subunit by binding and bridging several RNA helices of the 16S rRNA. Forms an intersubunit bridge (bridge B4) with the 23S rRNA of the 50S subunit in the ribosome. This Salinispora tropica (strain ATCC BAA-916 / DSM 44818 / JCM 13857 / NBRC 105044 / CNB-440) protein is Small ribosomal subunit protein uS15.